Consider the following 448-residue polypeptide: UDP-N-acetylmuramoylalanine--D-glutamate ligase (448 aa).

116-122 (GSNAKST) is an ATP binding site.

This sequence belongs to the MurCDEF family.

The protein localises to the cytoplasm. The enzyme catalyses UDP-N-acetyl-alpha-D-muramoyl-L-alanine + D-glutamate + ATP = UDP-N-acetyl-alpha-D-muramoyl-L-alanyl-D-glutamate + ADP + phosphate + H(+). It functions in the pathway cell wall biogenesis; peptidoglycan biosynthesis. Cell wall formation. Catalyzes the addition of glutamate to the nucleotide precursor UDP-N-acetylmuramoyl-L-alanine (UMA). This Pseudomonas syringae pv. tomato (strain ATCC BAA-871 / DC3000) protein is UDP-N-acetylmuramoylalanine--D-glutamate ligase.